An 870-amino-acid chain; its full sequence is NEDD4-like E3 ubiquitin-protein ligase WWP2 (870 aa).

Positions 1 to 117 (MASASSSRAG…KNNGGKMENM (117 aa)) constitute a C2 domain. A disordered region spans residues 151–299 (VPNGSALTDG…QQLPAAAQAP (149 aa)). Polar residues-rich tracts occupy residues 152-171 (PNGS…SSGT) and 200-210 (SARTTPATGEQ). Position 211 is a phosphoserine (Ser-211). Polar residues-rich tracts occupy residues 222 to 243 (VKNS…TTAT) and 263 to 272 (VTPNPNTTSL). The segment covering 290-299 (QQLPAAAQAP) has biased composition (low complexity). 4 consecutive WW domains span residues 300–333 (DALP…RPLP), 330–363 (RPLP…RPTA), 405–437 (GPLP…DPRT), and 444–477 (PALP…DPRP). Residues 536 to 870 (KPYDLRRRLY…IEETEGFGQE (335 aa)) form the HECT domain. The active-site Glycyl thioester intermediate is Cys-838.

As to quaternary structure, interacts with POU5F1, RBP1, EGR2 and SLC11A2. Interacts with SCNN1A, SCNN1B, SCNN1G, WBP1, WBP2 and ATN1. Interacts with ERBB4, NDFIP1 and NDFIP2. Interacts with ARRDC4. Interacts (via WW domains) with ARRDC1 (via PPxY motifs); ubiquitinates ARRDC1. Interacts (via WW domains) with ARRDC2 and ARRDC3. (Microbial infection) Interacts with adenovirus type 2 PIII. Autoubiquitinated. Ubiquitinated by the SCF(FBXL15) complex, leading to its degradation by the proteasome. In terms of tissue distribution, detected in heart, throughout the brain, placenta, lung, liver, muscle, kidney and pancreas. Also detected in spleen and peripheral blood leukocytes.

Its subcellular location is the nucleus. The enzyme catalyses S-ubiquitinyl-[E2 ubiquitin-conjugating enzyme]-L-cysteine + [acceptor protein]-L-lysine = [E2 ubiquitin-conjugating enzyme]-L-cysteine + N(6)-ubiquitinyl-[acceptor protein]-L-lysine.. The protein operates within protein modification; protein ubiquitination. Activated by NDFIP1- and NDFIP2-binding. In terms of biological role, E3 ubiquitin-protein ligase which accepts ubiquitin from an E2 ubiquitin-conjugating enzyme in the form of a thioester and then directly transfers the ubiquitin to targeted substrates. Polyubiquitinates POU5F1 by 'Lys-63'-linked conjugation and promotes it to proteasomal degradation; in embryonic stem cells (ESCs) the ubiquitination is proposed to regulate POU5F1 protein level. Ubiquitinates EGR2 and promotes it to proteasomal degradation; in T-cells the ubiquitination inhibits activation-induced cell death. Ubiquitinates SLC11A2; the ubiquitination is enhanced by presence of NDFIP1 and NDFIP2. Ubiquitinates RPB1 and promotes it to proteasomal degradation. The polypeptide is NEDD4-like E3 ubiquitin-protein ligase WWP2 (WWP2) (Homo sapiens (Human)).